Reading from the N-terminus, the 182-residue chain is Bis(5'-nucleosyl)-tetraphosphatase [asymmetrical] (182 aa).

Residues 3–110 (KQLYFSKFPV…IPRKKADFSE (108 aa)) enclose the HIT domain. Residues N28, Q84, and 90-93 (GQTV) contribute to the substrate site. A Histidine triad motif motif is present at residues 95–99 (HVHVH). H97 functions as the Tele-AMP-histidine intermediate in the catalytic mechanism. H99 is a substrate binding site. The tract at residues 135–161 (RYAGDERPPTSMRQAIPKDEDRKPRTL) is disordered. The segment covering 150 to 161 (IPKDEDRKPRTL) has biased composition (basic and acidic residues).

The catalysed reaction is P(1),P(4)-bis(5'-guanosyl) tetraphosphate + H2O = GMP + GTP + 2 H(+). Its function is as follows. Asymmetrically hydrolyzes Ap4A to yield AMP and ATP. This is Bis(5'-nucleosyl)-tetraphosphatase [asymmetrical] (aph1) from Schizosaccharomyces pombe (strain 972 / ATCC 24843) (Fission yeast).